The following is a 452-amino-acid chain: Caspase-2 (452 aa).

An N-acetylalanine modification is found at Ala-2. Positions Ala-2–Asp-169 are excised as a propeptide. The 90-residue stretch at Met-32–Thr-121 folds into the CARD domain. At Ser-157 the chain carries Phosphoserine. Active-site residues include His-277 and Cys-320. Positions Asp-326 to Asp-333 are excised as a propeptide. Positions Arg-327–Asn-336 are enriched in basic and acidic residues. Residues Arg-327–Gly-349 form a disordered region. Ser-340 bears the Phosphoserine mark.

This sequence belongs to the peptidase C14A family. In terms of assembly, heterotetramer that consists of two anti-parallel arranged heterodimers, each one formed by a p18 subunit and a p12 subunit. Forms a complex named the PIDDosome with PIDD1 and CRADD. Interacts with NOL3 (via CARD domain); inhibits CASP2 activity in a phosphorylation-dependent manner. The mature protease can process its own propeptide, but not that of other caspases.

It catalyses the reaction Strict requirement for an Asp residue at P1, with 316-Asp being essential for proteolytic activity and has a preferred cleavage sequence of Val-Asp-Val-Ala-Asp-|-.. In terms of biological role, involved in the activation cascade of caspases responsible for apoptosis execution. Might function by either activating some proteins required for cell death or inactivating proteins necessary for cell survival. Associates with PIDD1 and CRADD to form the PIDDosome, a complex that activates CASP2 and triggers apoptosis in response to genotoxic stress. This Rattus norvegicus (Rat) protein is Caspase-2 (Casp2).